We begin with the raw amino-acid sequence, 158 residues long: UPF0329 protein ECU06_0050 (158 aa).

The protein belongs to the UPF0329 family.

The polypeptide is UPF0329 protein ECU06_0050 (Encephalitozoon cuniculi (strain GB-M1) (Microsporidian parasite)).